The chain runs to 207 residues: MGGKWSKGCISGWPAVRERIRQTEPAAEGVGAVSQDLDRRGAVTINNIASNNADSAWLEAQEEEEEVGFPVRPQVPLRPMTYKGAFDLSHFLKEKGGLEGLIYSKKRQEILDLWVYNTQGYFPDWHNYTPGPGERYPLTFGWCFKLVPVDPQDVEKANEGENNSLLHPMCQHGIEDPEREVLMWKFDSRLALRHRAKELHPEFYKDC.

The N-myristoyl glycine; by host moiety is linked to residue Gly2. Residue Ser6 is modified to Phosphoserine; by host. An acidic; interacts with host PACS1 and PACS2; stabilizes the interaction of NEF/MHC-I with host AP1M1; necessary for MHC-I internalization region spans residues 62–66 (EEEEE). The tract at residues 70-79 (PVRPQVPLRP) is SH3-binding; interaction with Src family tyrosine kinases. A PxxP; stabilizes the interaction of NEF/MHC-I with host AP1M1; necessary for MHC-I internalization motif is present at residues 73–76 (PQVP). The interval 109–125 (EILDLWVYNTQGYFPDW) is mediates dimerization, Nef-PTE1 interaction. Residues 149–181 (VDPQDVEKANEGENNSLLHPMCQHGIEDPEREV) are binding to ATP6V1H. Residues 165–166 (LL) carry the Dileucine internalization motif; necessary for CD4 internalization motif. The short motif at 175-176 (ED) is the Diacidic; necessary for CD4 internalization element.

This sequence belongs to the lentivirus primate group Nef protein family. Monomer; cytosolic form. Homodimer; membrane bound form. Interacts with Nef associated p21-activated kinase (PAK2); this interaction activates PAK2. Associates with the Nef-MHC-I-AP1 complex; this complex is required for MHC-I internalization. Interacts (via C-terminus) with host PI3-kinase. Interacts with host PACS1; this interaction seems to be weak. Interacts with host PACS2. Interacts with host LCK and MAPK3; these interactions inhibit the kinase activity of the latter. Interacts with host ATP6V1H; this interaction may play a role in CD4 endocytosis. Associates with the CD4-Nef-AP2 complex; this complex is required for CD4 internalization. Interacts with host AP2 subunit alpha and AP2 subunit sigma2. Interacts with TCR-zeta chain; this interaction up-regulates the Fas ligand (FasL) surface expression. Interacts with host HCK, LYN, and SRC; these interactions activate the Src family kinases. Interacts with MAP3K5; this interaction inhibits the Fas and TNFR-mediated death signals. Interacts with beta-COP and PTE1. Interacts with human RACK1; this increases Nef phosphorylation by PKC. Interacts with TP53; this interaction decreases the half-life of TP53, protecting the infected cell against p53-mediated apoptosis. Post-translationally, the virion-associated Nef proteins are cleaved by the viral protease to release the soluble C-terminal core protein. Nef is probably cleaved concomitantly with viral structural proteins on maturation of virus particles. In terms of processing, myristoylated. Phosphorylated on serine residues, probably by host PKCdelta and theta.

It is found in the host cell membrane. The protein localises to the virion. It localises to the secreted. The protein resides in the host Golgi apparatus membrane. Factor of infectivity and pathogenicity, required for optimal virus replication. Alters numerous pathways of T-lymphocyte function and down-regulates immunity surface molecules in order to evade host defense and increase viral infectivity. Alters the functionality of other immunity cells, like dendritic cells, monocytes/macrophages and NK cells. In terms of biological role, in infected CD4(+) T-lymphocytes, down-regulates the surface MHC-I, mature MHC-II, CD4, CD28, CCR5 and CXCR4 molecules. Mediates internalization and degradation of host CD4 through the interaction of with the cytoplasmic tail of CD4, the recruitment of AP-2 (clathrin adapter protein complex 2), internalization through clathrin coated pits, and subsequent transport to endosomes and lysosomes for degradation. Diverts host MHC-I molecules to the trans-Golgi network-associated endosomal compartments by an endocytic pathway to finally target them for degradation. MHC-I down-regulation may involve AP-1 (clathrin adapter protein complex 1) or possibly Src family kinase-ZAP70/Syk-PI3K cascade recruited by PACS2. In consequence infected cells are masked for immune recognition by cytotoxic T-lymphocytes. Decreasing the number of immune receptors also prevents reinfection by more HIV particles (superinfection). Down-regulates host SERINC3 and SERINC5 thereby excluding these proteins from the viral particles. Virion infectivity is drastically higher when SERINC3 or SERINC5 are excluded from the viral envelope, because these host antiviral proteins impair the membrane fusion event necessary for subsequent virion penetration. Its function is as follows. Bypasses host T-cell signaling by inducing a transcriptional program nearly identical to that of anti-CD3 cell activation. Interaction with TCR-zeta chain up-regulates the Fas ligand (FasL). Increasing surface FasL molecules and decreasing surface MHC-I molecules on infected CD4(+) cells send attacking cytotoxic CD8+ T-lymphocytes into apoptosis. Functionally, plays a role in optimizing the host cell environment for viral replication without causing cell death by apoptosis. Protects the infected cells from apoptosis in order to keep them alive until the next virus generation is ready to strike. Inhibits the Fas and TNFR-mediated death signals by blocking MAP3K5/ASK1. Decreases the half-life of TP53, protecting the infected cell against p53-mediated apoptosis. Inhibits the apoptotic signals regulated by the Bcl-2 family proteins through the formation of a Nef/PI3-kinase/PAK2 complex that leads to activation of PAK2 and induces phosphorylation of host BAD. Extracellular Nef protein targets CD4(+) T-lymphocytes for apoptosis by interacting with CXCR4 surface receptors. This is Protein Nef from Homo sapiens (Human).